We begin with the raw amino-acid sequence, 189 residues long: GTP cyclohydrolase 1 (189 aa).

Positions 76, 79, and 149 each coordinate Zn(2+).

It belongs to the GTP cyclohydrolase I family. In terms of assembly, homomer.

It catalyses the reaction GTP + H2O = 7,8-dihydroneopterin 3'-triphosphate + formate + H(+). It participates in cofactor biosynthesis; 7,8-dihydroneopterin triphosphate biosynthesis; 7,8-dihydroneopterin triphosphate from GTP: step 1/1. This Dehalococcoides mccartyi (strain ATCC BAA-2100 / JCM 16839 / KCTC 5957 / BAV1) protein is GTP cyclohydrolase 1.